The chain runs to 790 residues: N-methylputrescine oxidase 1, peroxisomal (790 aa).

The disordered stretch occupies residues 1–23 (MATTKQKVTAPSPSPSSSTASCC). Residues 9–23 (TAPSPSPSSSTASCC) are compositionally biased toward low complexity. Residue 423 to 434 (AFDAGEDGLGKN) participates in substrate binding. The active-site Proton acceptor is the D425. C444 and C470 form a disulfide bridge. 506 to 511 (VANYEY) is a substrate binding site. Y509 acts as the Schiff-base intermediate with substrate; via topaquinone in catalysis. At Y509 the chain carries 2',4',5'-topaquinone. Residues H559 and H561 each contribute to the Cu cation site. Mn(2+) is bound by residues D714 and I715. Position 725 (H725) interacts with Cu cation.

Belongs to the copper/topaquinone oxidase family. Homodimer. It depends on Cu cation as a cofactor. Zn(2+) serves as cofactor. Requires L-topaquinone as cofactor. In terms of processing, topaquinone (TPQ) is generated by copper-dependent autoxidation of a specific tyrosyl residue. Mainly expressed in roots, and, to a lower extent, in stems.

It is found in the peroxisome. The enzyme catalyses a primary methyl amine + O2 + H2O = an aldehyde + H2O2 + NH4(+). It carries out the reaction N-methylputrescine + O2 + H2O = 4-methylaminobutanal + H2O2 + NH4(+). It functions in the pathway alkaloid biosynthesis; nicotine biosynthesis. Involved in the biosynthesis of pyridine alkaloid natural products, leading mainly to the production of anabasine, anatabine, nicotine and nornicotine, effective deterrents against herbivores with antiparasitic and pesticide properties (neurotoxins); nornicotine serves as the precursor in the synthesis of the carcinogen compound N'-nitrosonornicotine (NNN). Amine oxidase which mediates the deamination of N-methylputrescine to produce 4-methylaminobutanal. Oxidizes preferentially N-methylated amines. This Nicotiana tabacum (Common tobacco) protein is N-methylputrescine oxidase 1, peroxisomal.